Consider the following 192-residue polypeptide: Xanthine phosphoribosyltransferase (192 aa).

Residues leucine 20 and asparagine 27 each coordinate xanthine. Alanine 128–alanine 132 is a binding site for 5-phospho-alpha-D-ribose 1-diphosphate. Lysine 156 lines the xanthine pocket.

It belongs to the purine/pyrimidine phosphoribosyltransferase family. Xpt subfamily. Homodimer.

The protein localises to the cytoplasm. The enzyme catalyses XMP + diphosphate = xanthine + 5-phospho-alpha-D-ribose 1-diphosphate. The protein operates within purine metabolism; XMP biosynthesis via salvage pathway; XMP from xanthine: step 1/1. In terms of biological role, converts the preformed base xanthine, a product of nucleic acid breakdown, to xanthosine 5'-monophosphate (XMP), so it can be reused for RNA or DNA synthesis. The chain is Xanthine phosphoribosyltransferase from Staphylococcus carnosus (strain TM300).